We begin with the raw amino-acid sequence, 226 residues long: tRNA (guanine-N(1)-)-methyltransferase (226 aa).

Residues glycine 110 and 129 to 134 (IGDYIL) each bind S-adenosyl-L-methionine.

This sequence belongs to the RNA methyltransferase TrmD family. Homodimer.

It localises to the cytoplasm. The catalysed reaction is guanosine(37) in tRNA + S-adenosyl-L-methionine = N(1)-methylguanosine(37) in tRNA + S-adenosyl-L-homocysteine + H(+). Functionally, specifically methylates guanosine-37 in various tRNAs. This is tRNA (guanine-N(1)-)-methyltransferase from Malacoplasma penetrans (strain HF-2) (Mycoplasma penetrans).